The primary structure comprises 275 residues: Diaminopimelate epimerase (275 aa).

Asn-12, Gln-45, and Asn-65 together coordinate substrate. Cys-74 functions as the Proton donor in the catalytic mechanism. Substrate contacts are provided by residues 75–76 (GN), Asn-158, Asn-191, and 209–210 (ER). The Proton acceptor role is filled by Cys-218. Position 219-220 (219-220 (GT)) interacts with substrate.

It belongs to the diaminopimelate epimerase family. As to quaternary structure, homodimer.

The protein resides in the cytoplasm. The enzyme catalyses (2S,6S)-2,6-diaminopimelate = meso-2,6-diaminopimelate. The protein operates within amino-acid biosynthesis; L-lysine biosynthesis via DAP pathway; DL-2,6-diaminopimelate from LL-2,6-diaminopimelate: step 1/1. Catalyzes the stereoinversion of LL-2,6-diaminopimelate (L,L-DAP) to meso-diaminopimelate (meso-DAP), a precursor of L-lysine and an essential component of the bacterial peptidoglycan. The sequence is that of Diaminopimelate epimerase from Shewanella baltica (strain OS223).